The following is a 285-amino-acid chain: Probable endonuclease 4 (285 aa).

Residues His69, His109, Glu145, Asp179, His182, His216, Asp229, His231, and Glu261 each contribute to the Zn(2+) site.

Belongs to the AP endonuclease 2 family. The cofactor is Zn(2+).

The catalysed reaction is Endonucleolytic cleavage to 5'-phosphooligonucleotide end-products.. Functionally, endonuclease IV plays a role in DNA repair. It cleaves phosphodiester bonds at apurinic or apyrimidinic (AP) sites, generating a 3'-hydroxyl group and a 5'-terminal sugar phosphate. The polypeptide is Probable endonuclease 4 (Salmonella arizonae (strain ATCC BAA-731 / CDC346-86 / RSK2980)).